Consider the following 156-residue polypeptide: Ribosomal RNA large subunit methyltransferase H (156 aa).

S-adenosyl-L-methionine is bound by residues Leu-72, Gly-104, and 123–128 (FGAMVW).

Belongs to the RNA methyltransferase RlmH family. As to quaternary structure, homodimer.

The protein resides in the cytoplasm. It carries out the reaction pseudouridine(1915) in 23S rRNA + S-adenosyl-L-methionine = N(3)-methylpseudouridine(1915) in 23S rRNA + S-adenosyl-L-homocysteine + H(+). In terms of biological role, specifically methylates the pseudouridine at position 1915 (m3Psi1915) in 23S rRNA. This is Ribosomal RNA large subunit methyltransferase H from Ruegeria pomeroyi (strain ATCC 700808 / DSM 15171 / DSS-3) (Silicibacter pomeroyi).